A 247-amino-acid chain; its full sequence is Small ribosomal subunit protein uS2 (247 aa).

The protein belongs to the universal ribosomal protein uS2 family.

This chain is Small ribosomal subunit protein uS2, found in Pseudomonas syringae pv. tomato (strain ATCC BAA-871 / DC3000).